A 100-amino-acid chain; its full sequence is Integration host factor subunit alpha (100 aa).

The segment at 50–70 (GNFQLRDKPQRPGRNPKTGEE) is disordered.

It belongs to the bacterial histone-like protein family. In terms of assembly, heterodimer of an alpha and a beta chain.

Its function is as follows. This protein is one of the two subunits of integration host factor, a specific DNA-binding protein that functions in genetic recombination as well as in transcriptional and translational control. This is Integration host factor subunit alpha from Chromobacterium violaceum (strain ATCC 12472 / DSM 30191 / JCM 1249 / CCUG 213 / NBRC 12614 / NCIMB 9131 / NCTC 9757 / MK).